A 33-amino-acid chain; its full sequence is Glucagon-2 (33 aa).

This sequence belongs to the glucagon family.

It is found in the secreted. Promotes hydrolysis of glycogen and lipids, and raises the blood sugar level. This Oreochromis niloticus (Nile tilapia) protein is Glucagon-2 (gcg2).